A 192-amino-acid polypeptide reads, in one-letter code: Large ribosomal subunit protein bL25 (192 aa).

It belongs to the bacterial ribosomal protein bL25 family. CTC subfamily. As to quaternary structure, part of the 50S ribosomal subunit; part of the 5S rRNA/L5/L18/L25 subcomplex. Contacts the 5S rRNA. Binds to the 5S rRNA independently of L5 and L18.

In terms of biological role, this is one of the proteins that binds to the 5S RNA in the ribosome where it forms part of the central protuberance. In Cytophaga hutchinsonii (strain ATCC 33406 / DSM 1761 / CIP 103989 / NBRC 15051 / NCIMB 9469 / D465), this protein is Large ribosomal subunit protein bL25.